The sequence spans 342 residues: Holliday junction branch migration complex subunit RuvB (342 aa).

The segment at Met-1–Tyr-181 is large ATPase domain (RuvB-L). ATP-binding positions include Leu-20, Arg-21, Gly-62, Lys-65, Thr-66, Thr-67, Glu-128 to Tyr-130, Arg-171, Tyr-181, and Arg-218. Thr-66 lines the Mg(2+) pocket. The segment at Thr-182–Glu-252 is small ATPAse domain (RuvB-S). The head domain (RuvB-H) stretch occupies residues Lys-255–Lys-342. Residues Arg-310 and Arg-315 each contribute to the DNA site.

Belongs to the RuvB family. In terms of assembly, homohexamer. Forms an RuvA(8)-RuvB(12)-Holliday junction (HJ) complex. HJ DNA is sandwiched between 2 RuvA tetramers; dsDNA enters through RuvA and exits via RuvB. An RuvB hexamer assembles on each DNA strand where it exits the tetramer. Each RuvB hexamer is contacted by two RuvA subunits (via domain III) on 2 adjacent RuvB subunits; this complex drives branch migration. In the full resolvosome a probable DNA-RuvA(4)-RuvB(12)-RuvC(2) complex forms which resolves the HJ.

It is found in the cytoplasm. It carries out the reaction ATP + H2O = ADP + phosphate + H(+). Functionally, the RuvA-RuvB-RuvC complex processes Holliday junction (HJ) DNA during genetic recombination and DNA repair, while the RuvA-RuvB complex plays an important role in the rescue of blocked DNA replication forks via replication fork reversal (RFR). RuvA specifically binds to HJ cruciform DNA, conferring on it an open structure. The RuvB hexamer acts as an ATP-dependent pump, pulling dsDNA into and through the RuvAB complex. RuvB forms 2 homohexamers on either side of HJ DNA bound by 1 or 2 RuvA tetramers; 4 subunits per hexamer contact DNA at a time. Coordinated motions by a converter formed by DNA-disengaged RuvB subunits stimulates ATP hydrolysis and nucleotide exchange. Immobilization of the converter enables RuvB to convert the ATP-contained energy into a lever motion, pulling 2 nucleotides of DNA out of the RuvA tetramer per ATP hydrolyzed, thus driving DNA branch migration. The RuvB motors rotate together with the DNA substrate, which together with the progressing nucleotide cycle form the mechanistic basis for DNA recombination by continuous HJ branch migration. Branch migration allows RuvC to scan DNA until it finds its consensus sequence, where it cleaves and resolves cruciform DNA. This chain is Holliday junction branch migration complex subunit RuvB, found in Clostridium botulinum (strain 657 / Type Ba4).